The following is a 510-amino-acid chain: 2-isopropylmalate synthase (510 aa).

In terms of domain architecture, Pyruvate carboxyltransferase spans 5–267 (LIIFDTTLRD…DTRIDSVHIV (263 aa)). Mn(2+) contacts are provided by Asp14, His202, His204, and Asn238. Positions 392-510 (KLLSLTAHSE…SKLERAHPQV (119 aa)) are regulatory domain.

It belongs to the alpha-IPM synthase/homocitrate synthase family. LeuA type 1 subfamily. As to quaternary structure, homodimer. Requires Mn(2+) as cofactor.

Its subcellular location is the cytoplasm. It catalyses the reaction 3-methyl-2-oxobutanoate + acetyl-CoA + H2O = (2S)-2-isopropylmalate + CoA + H(+). The protein operates within amino-acid biosynthesis; L-leucine biosynthesis; L-leucine from 3-methyl-2-oxobutanoate: step 1/4. Functionally, catalyzes the condensation of the acetyl group of acetyl-CoA with 3-methyl-2-oxobutanoate (2-ketoisovalerate) to form 3-carboxy-3-hydroxy-4-methylpentanoate (2-isopropylmalate). The protein is 2-isopropylmalate synthase of Nitrosospira multiformis (strain ATCC 25196 / NCIMB 11849 / C 71).